The primary structure comprises 353 residues: Photosystem II D2 protein (353 aa).

Thr2 is modified (N-acetylthreonine). Residue Thr2 is modified to Phosphothreonine. A helical transmembrane segment spans residues 41 to 61 (CAYFALGGWFTGTTFVTSWYT). His118 is a binding site for chlorophyll a. The helical transmembrane segment at 125–141 (GFMLRQFELARSVQLRP) threads the bilayer. Positions 130 and 143 each coordinate pheophytin a. The chain crosses the membrane as a helical span at residues 153 to 166 (VFVSVFLIYPLGQS). Residue His198 participates in chlorophyll a binding. The helical transmembrane segment at 208–228 (AALLCAIHGATVENTLFEDGD) threads the bilayer. His215 and Phe262 together coordinate a plastoquinone. Fe cation is bound at residue His215. His269 contacts Fe cation. A helical transmembrane segment spans residues 279–295 (GLWMSALGVVGLALNLR).

Belongs to the reaction center PufL/M/PsbA/D family. PSII is composed of 1 copy each of membrane proteins PsbA, PsbB, PsbC, PsbD, PsbE, PsbF, PsbH, PsbI, PsbJ, PsbK, PsbL, PsbM, PsbT, PsbX, PsbY, PsbZ, Psb30/Ycf12, at least 3 peripheral proteins of the oxygen-evolving complex and a large number of cofactors. It forms dimeric complexes. The cofactor is The D1/D2 heterodimer binds P680, chlorophylls that are the primary electron donor of PSII, and subsequent electron acceptors. It shares a non-heme iron and each subunit binds pheophytin, quinone, additional chlorophylls, carotenoids and lipids. There is also a Cl(-1) ion associated with D1 and D2, which is required for oxygen evolution. The PSII complex binds additional chlorophylls, carotenoids and specific lipids..

It is found in the plastid. It localises to the chloroplast thylakoid membrane. It carries out the reaction 2 a plastoquinone + 4 hnu + 2 H2O = 2 a plastoquinol + O2. Functionally, photosystem II (PSII) is a light-driven water:plastoquinone oxidoreductase that uses light energy to abstract electrons from H(2)O, generating O(2) and a proton gradient subsequently used for ATP formation. It consists of a core antenna complex that captures photons, and an electron transfer chain that converts photonic excitation into a charge separation. The D1/D2 (PsbA/PsbD) reaction center heterodimer binds P680, the primary electron donor of PSII as well as several subsequent electron acceptors. D2 is needed for assembly of a stable PSII complex. In Ceratophyllum demersum (Rigid hornwort), this protein is Photosystem II D2 protein.